Reading from the N-terminus, the 377-residue chain is Required for respiratory growth protein 1, mitochondrial (377 aa).

Belongs to the RRG1 family.

The protein resides in the mitochondrion. Its function is as follows. Essential for respiratory growth and required for mitochondrial protein synthesis. Required for vacuolar acidification. The chain is Required for respiratory growth protein 1, mitochondrial (RRG1) from Candida glabrata (strain ATCC 2001 / BCRC 20586 / JCM 3761 / NBRC 0622 / NRRL Y-65 / CBS 138) (Yeast).